The primary structure comprises 121 residues: Chorion protein S15 (121 aa).

The signal sequence occupies residues 1-18; it reads MKYLFVCVSLALFAYISA.

The protein belongs to the chorion protein S15/S18 family.

The protein localises to the secreted. Its function is as follows. Chorion membrane (egg shell) protein; plays a role in protecting the egg from the environment. The protein is Chorion protein S15 (Cp15) of Drosophila subobscura (Fruit fly).